Consider the following 378-residue polypeptide: MRLRTALLATTLMAAAPVAANATIITGPYVDLGGGYNLVQNQHGHFSNDPANASMLTKSSSQYRHDAGFTGFGAVGWGFGNGLRLEAEGLYNYSEINHRAPTAATGVTSGHDQSYGGMLNVLYDIDLKQFGIDVPVTPFVGVGAGYLWQNVSPTTTRYSNGNVSRLGGTNGGFAYQGIVGAAYDIPNMPGLQLTAQYRMVGQAFSDGPFTMTSYTNGVGKSVGHAFFDNRFNHQFILGLRYAFNTAPPPPPPAPVVVPPAPTPARTYLVFFDWDRSDLTARAREIVAEAAQASTHVQTTRIEVNGYTDNSAAHPGPRGEKYNMGLSIRRAQSVKAELIRDGVPTGAIDIHGYGEQHPLVPTGPNTREPQNRRVEIILH.

Residues 1–22 (MRLRTALLATTLMAAAPVAANA) form the signal peptide. The region spanning 258–378 (PPAPTPARTY…QNRRVEIILH (121 aa)) is the OmpA-like domain.

The protein resides in the cell outer membrane. Its function is as follows. Growth enhancer. The chain is Outer membrane protein from Gluconacetobacter diazotrophicus (strain ATCC 49037 / DSM 5601 / CCUG 37298 / CIP 103539 / LMG 7603 / PAl5).